Here is a 383-residue protein sequence, read N- to C-terminus: Deoxyhypusine synthase-like protein (383 aa).

It belongs to the deoxyhypusine synthase family.

The polypeptide is Deoxyhypusine synthase-like protein (Nostoc sp. (strain PCC 7120 / SAG 25.82 / UTEX 2576)).